We begin with the raw amino-acid sequence, 215 residues long: MSKVYDWFEERLEIQAIADDITSKYVPPHVNIFYCLGGITLTCFLVQVATGFAMTFYYRPTVTEAFASVQYIMTEANFGWLIRSVHRWSASMMVLMMILHVFRVYLTGGFKKPRELTWVTGVVLAVLTASFGVTGYSLPWDQIGYWAVKIVTGVPEAIPVIGSPLVELLRGSASVGQSTLTRFYSLHTFVLPLLTAVFMLMHFLMIRKQGISGPL.

The helical transmembrane segment at 32–52 threads the bilayer; the sequence is IFYCLGGITLTCFLVQVATGF. Cysteine 35 contacts heme c. Positions 86 and 100 each coordinate heme b. 3 helical membrane-spanning segments follow: residues 90–110, 116–136, and 186–206; these read ASMMVLMMILHVFRVYLTGGF, LTWVTGVVLAVLTASFGVTGY, and LHTFVLPLLTAVFMLMHFLMI. Heme b contacts are provided by histidine 187 and histidine 202.

This sequence belongs to the cytochrome b family. PetB subfamily. As to quaternary structure, the 4 large subunits of the cytochrome b6-f complex are cytochrome b6, subunit IV (17 kDa polypeptide, PetD), cytochrome f and the Rieske protein, while the 4 small subunits are PetG, PetL, PetM and PetN. The complex functions as a dimer. Heme b serves as cofactor. The cofactor is heme c.

Its subcellular location is the plastid. It localises to the chloroplast thylakoid membrane. In terms of biological role, component of the cytochrome b6-f complex, which mediates electron transfer between photosystem II (PSII) and photosystem I (PSI), cyclic electron flow around PSI, and state transitions. The chain is Cytochrome b6 from Eucalyptus globulus subsp. globulus (Tasmanian blue gum).